Here is a 353-residue protein sequence, read N- to C-terminus: Small ribosomal subunit protein uS2 (353 aa).

The segment at 256 to 353 (DTDEQSSAAN…TPAESTDEQA (98 aa)) is disordered. Low complexity-rich tracts occupy residues 263 to 311 (AANT…AEAP) and 321 to 339 (ESAT…TPAE). Positions 340 to 353 (AEAETPAESTDEQA) are enriched in acidic residues.

It belongs to the universal ribosomal protein uS2 family.

The protein is Small ribosomal subunit protein uS2 of Beutenbergia cavernae (strain ATCC BAA-8 / DSM 12333 / CCUG 43141 / JCM 11478 / NBRC 16432 / NCIMB 13614 / HKI 0122).